Here is a 161-residue protein sequence, read N- to C-terminus: ATP synthase subunit b' (161 aa).

A helical membrane pass occupies residues 26–45 (LPLMAIQFLLLAFVLDKIFY).

Belongs to the ATPase B chain family. As to quaternary structure, F-type ATPases have 2 components, F(1) - the catalytic core - and F(0) - the membrane proton channel. F(1) has five subunits: alpha(3), beta(3), gamma(1), delta(1), epsilon(1). F(0) has four main subunits: a(1), b(1), b'(1) and c(10-14). The alpha and beta chains form an alternating ring which encloses part of the gamma chain. F(1) is attached to F(0) by a central stalk formed by the gamma and epsilon chains, while a peripheral stalk is formed by the delta, b and b' chains.

The protein resides in the cellular thylakoid membrane. In terms of biological role, f(1)F(0) ATP synthase produces ATP from ADP in the presence of a proton or sodium gradient. F-type ATPases consist of two structural domains, F(1) containing the extramembraneous catalytic core and F(0) containing the membrane proton channel, linked together by a central stalk and a peripheral stalk. During catalysis, ATP synthesis in the catalytic domain of F(1) is coupled via a rotary mechanism of the central stalk subunits to proton translocation. Component of the F(0) channel, it forms part of the peripheral stalk, linking F(1) to F(0). The b'-subunit is a diverged and duplicated form of b found in plants and photosynthetic bacteria. This Trichodesmium erythraeum (strain IMS101) protein is ATP synthase subunit b'.